We begin with the raw amino-acid sequence, 110 residues long: DNA-binding protein Mlab_1482 (110 aa).

Belongs to the PDCD5 family.

This chain is DNA-binding protein Mlab_1482, found in Methanocorpusculum labreanum (strain ATCC 43576 / DSM 4855 / Z).